A 555-amino-acid chain; its full sequence is Wee1-like protein kinase 2-A (555 aa).

2 disordered regions span residues 1–81 (MRTA…SVGA) and 149–175 (FTPESYRQTHFQPNGKRKERPEDDCRT). The span at 38–48 (SPVSSWRTNNC) shows a compositional bias: polar residues. Residues 68–78 (SPSSDYSPDPS) are compositionally biased toward low complexity. Polar residues predominate over residues 149–160 (FTPESYRQTHFQ). One can recognise a Protein kinase domain in the interval 210–480 (FLEIEKIGAG…AASLAKNSVL (271 aa)). ATP-binding positions include 216-224 (IGAGEFGSV) and lysine 239. The active-site Proton acceptor is the aspartate 337. The Mg(2+) site is built by asparagine 342 and aspartate 374. Positions 487–513 (AAQLQKQLNVEKFKTAMLERELKAAKL) form a coiled coil. Serine 549 is modified (phosphoserine).

It belongs to the protein kinase superfamily. Ser/Thr protein kinase family. WEE1 subfamily. As to quaternary structure, interacts with prmt5; this promotes protesomal degradation of wee2-a in the nucleus. The interaction with prmt5 is disrupted upon activation of the DNA replication checkpoint. Post-translationally, subject to proteasomal degradation in the nucleus. Detected in egg (at protein level). Oocyte-specific maternally supplied protein. Present in immature and mature oocytes and in early (pregastrula) embryos, but not in post-gastrula embryos.

It localises to the nucleus. It is found in the cytoplasm. Its subcellular location is the cytosol. The enzyme catalyses L-tyrosyl-[protein] + ATP = O-phospho-L-tyrosyl-[protein] + ADP + H(+). Oocyte-specific protein tyrosine kinase that phosphorylates and inhibits cdk1 and acts as a key regulator of meiosis. Required to maintain meiotic arrest in oocytes by phosphorylating cdk1 at 'Tyr-15', which inhibits cdk1 activity and prevents meiotic reentry. Negative regulator of mitosis. Involved in the mitotic DNA replication checkpoint. The polypeptide is Wee1-like protein kinase 2-A (wee2-a) (Xenopus laevis (African clawed frog)).